A 635-amino-acid chain; its full sequence is Probable extracellular metalloproteinase 1 (635 aa).

The signal sequence occupies residues Met-1–Ala-19. Residues His-20–His-246 constitute a propeptide that is removed on maturation. Asn-287 carries N-linked (GlcNAc...) asparagine glycosylation. Residue His-430 participates in Zn(2+) binding. Glu-431 is a catalytic residue. His-434 lines the Zn(2+) pocket. Asn-475, Asn-594, and Asn-623 each carry an N-linked (GlcNAc...) asparagine glycan.

Belongs to the peptidase M36 family. Requires Zn(2+) as cofactor.

The protein localises to the secreted. In terms of biological role, secreted metalloproteinase probably acting as a virulence factor. This Trichophyton verrucosum (strain HKI 0517) protein is Probable extracellular metalloproteinase 1 (MEP1).